The sequence spans 167 residues: Large ribosomal subunit protein uL10 (167 aa).

The protein belongs to the universal ribosomal protein uL10 family. As to quaternary structure, part of the ribosomal stalk of the 50S ribosomal subunit. The N-terminus interacts with L11 and the large rRNA to form the base of the stalk. The C-terminus forms an elongated spine to which L12 dimers bind in a sequential fashion forming a multimeric L10(L12)X complex.

Its function is as follows. Forms part of the ribosomal stalk, playing a central role in the interaction of the ribosome with GTP-bound translation factors. This chain is Large ribosomal subunit protein uL10, found in Mycoplasma mobile (strain ATCC 43663 / 163K / NCTC 11711) (Mesomycoplasma mobile).